The primary structure comprises 127 residues: Small ribosomal subunit protein uS11 (127 aa).

It belongs to the universal ribosomal protein uS11 family. As to quaternary structure, part of the 30S ribosomal subunit. Interacts with proteins S7 and S18. Binds to IF-3.

Located on the platform of the 30S subunit, it bridges several disparate RNA helices of the 16S rRNA. Forms part of the Shine-Dalgarno cleft in the 70S ribosome. This chain is Small ribosomal subunit protein uS11, found in Rickettsia prowazekii (strain Madrid E).